A 72-amino-acid polypeptide reads, in one-letter code: UPF0270 protein ETA_31870 (72 aa).

It belongs to the UPF0270 family.

This is UPF0270 protein ETA_31870 from Erwinia tasmaniensis (strain DSM 17950 / CFBP 7177 / CIP 109463 / NCPPB 4357 / Et1/99).